An 857-amino-acid polypeptide reads, in one-letter code: RNA-directed RNA polymerase 2a (857 aa).

One can recognise a RdRp catalytic domain in the interval 511–624 (KHCLEIDLSK…FSLLPPVGDP (114 aa)). A compositionally biased stretch (basic and acidic residues) spans 780-789 (IERRCNDKRR). The interval 780 to 829 (IERRCNDKRRTPTGSYGGGEEAETKVSQTESTGTRSQKSQRESAFKSQTV) is disordered. The segment covering 804 to 816 (KVSQTESTGTRSQ) has biased composition (polar residues).

This sequence belongs to the ssRNA positive-strand viruses RNA-directed RNA polymerase family. As to quaternary structure, interacts with replication protein 1a.

It carries out the reaction RNA(n) + a ribonucleoside 5'-triphosphate = RNA(n+1) + diphosphate. Its function is as follows. RNA-dependent RNA polymerase which replicates the viral genome composed of 3 RNA segments, RNA1, RNA2 and RNA3. The protein is RNA-directed RNA polymerase 2a of Cucumis sativus (Cucumber).